The primary structure comprises 443 residues: UDP-N-acetylmuramate--L-alanine ligase (443 aa).

110-116 (GAHGKTS) serves as a coordination point for ATP.

Belongs to the MurCDEF family.

The protein localises to the cytoplasm. The enzyme catalyses UDP-N-acetyl-alpha-D-muramate + L-alanine + ATP = UDP-N-acetyl-alpha-D-muramoyl-L-alanine + ADP + phosphate + H(+). It participates in cell wall biogenesis; peptidoglycan biosynthesis. Cell wall formation. The chain is UDP-N-acetylmuramate--L-alanine ligase from Streptococcus equi subsp. zooepidemicus (strain MGCS10565).